The following is a 450-amino-acid chain: Sorting nexin-4 (450 aa).

An N-acetylmethionine modification is found at methionine 1. The tract at residues methionine 1–aspartate 46 is disordered. A Phosphoserine modification is found at serine 22. The PX domain occupies serine 61–tryptophan 187. Arginine 106, serine 108, lysine 132, and arginine 154 together coordinate a 1,2-diacyl-sn-glycero-3-phospho-(1D-myo-inositol-3-phosphate).

The protein belongs to the sorting nexin family. In terms of assembly, heterodimer; heterodimerizes with SNX7 or SNX30. Interacts with WWC1/KIBRA. Identified in a complex with WWC1/KIBRA and dynein components DYNLL1 and DYNC1I2. Interacts with BIN1.

It localises to the early endosome. The protein resides in the early endosome membrane. Functionally, involved in the regulation of endocytosis and in several stages of intracellular trafficking. Plays a role in recycling endocytosed transferrin receptor and prevent its degradation. Involved in autophagosome assembly by regulating trafficking and recycling of phospholipid scramblase ATG9A. The chain is Sorting nexin-4 from Pongo abelii (Sumatran orangutan).